Here is a 366-residue protein sequence, read N- to C-terminus: UDP-GlcNAc:ribostamycin N-acetylglucosaminyltransferase (366 aa).

Positions alanine 342–glycine 352 are enriched in low complexity. Positions alanine 342–glycine 366 are disordered. Over residues arginine 357–glycine 366 the composition is skewed to basic and acidic residues.

This sequence belongs to the glycosyltransferase group 1 family. Glycosyltransferase 4 subfamily. It depends on a divalent metal cation as a cofactor.

The enzyme catalyses ribostamycin + UDP-N-acetyl-alpha-D-glucosamine = 2'''-acetyl-6'''-hydroxyneomycin C + UDP + H(+). The protein operates within antibiotic biosynthesis; neomycin biosynthesis. Functionally, glycosyltransferase involved in the biosynthesis of neomycin by mediating glycosylation of ribostamycin with UDP-GlcNAc as a sugar donor to generate 2'''-acetyl-6'''-hydroxyneomycin C. The protein is UDP-GlcNAc:ribostamycin N-acetylglucosaminyltransferase (neoK) of Streptomyces fradiae (Streptomyces roseoflavus).